The sequence spans 523 residues: Putative L-type lectin-domain containing receptor kinase V.6 (523 aa).

Residues 1 to 27 (MFSEVKVLQIVLVQWLTLFSFTYNSHG) form the signal peptide. The segment at 28–242 (TYILDGSAVF…TGSIRALHYM (215 aa)) is legume-lectin like. The Extracellular portion of the chain corresponds to 28 to 279 (TYILDGSAVF…KPSDRLRTVL (252 aa)). Asn-47, Asn-59, Asn-112, and Asn-171 each carry an N-linked (GlcNAc...) asparagine glycan. A helical membrane pass occupies residues 280-300 (AVCLTLALFAVFLASGIGFVF). At 301 to 523 (YLRHKKVKEV…TGRAVRVKFF (223 aa)) the chain is on the cytoplasmic side. In terms of domain architecture, Protein kinase spans 335 to 523 (FKEKQLLGKG…TGRAVRVKFF (189 aa)). ATP is bound by residues 341–349 (LGKGGFGQV) and Lys-364. Asp-464 functions as the Proton acceptor in the catalytic mechanism.

It in the C-terminal section; belongs to the protein kinase superfamily. Ser/Thr protein kinase family. The protein in the N-terminal section; belongs to the leguminous lectin family.

It is found in the cell membrane. It catalyses the reaction L-seryl-[protein] + ATP = O-phospho-L-seryl-[protein] + ADP + H(+). The enzyme catalyses L-threonyl-[protein] + ATP = O-phospho-L-threonyl-[protein] + ADP + H(+). The sequence is that of Putative L-type lectin-domain containing receptor kinase V.6 (LECRK56) from Arabidopsis thaliana (Mouse-ear cress).